Reading from the N-terminus, the 802-residue chain is Putative flavin carrier protein 3 (802 aa).

Positions 1 to 28 (MRFLQVYKSSALIGLIILLASKVNLAEA) are cleaved as a signal peptide. The Lumenal segment spans residues 29–169 (KRKLVATSLV…YFSNGKTVSQ (141 aa)). N-linked (GlcNAc...) asparagine glycosylation occurs at asparagine 149. The chain crosses the membrane as a helical span at residues 170–190 (IGVKWATAVVAGIGLLLSAIL). Residues 191-200 (STFGNSTAAS) lie on the Cytoplasmic side of the membrane. A helical membrane pass occupies residues 201–221 (HISANTMSLFLYFQSVVVVAM). The Lumenal portion of the chain corresponds to 222-229 (QHVHRVPP). Residues 230-250 (IAAAWAENLVWSMGLIRISFM) form a helical membrane-spanning segment. The Cytoplasmic segment spans residues 251–255 (QRIFR). Residues 256 to 278 (WYVQSTGGTPSLYLTSTSMSVLA) form a helical membrane-spanning segment. At 279 to 323 (QRSWQYLMELPLIKRATNVLYGNANTLIFRGIKRLGYKMGIENTS) the chain is on the lumenal side. N-linked (GlcNAc...) asparagine glycosylation occurs at asparagine 321. Residues 324 to 344 (IVCTGFTFFVLCGYVLAGFII) form a helical membrane-spanning segment. Over 345-377 (VFKCCVELATRLGWIQKARFWEFRKQWRMILKG) the chain is Cytoplasmic. Residues 378–398 (ALLRYIYIGFVQLTILSFWEF) traverse the membrane as a helical segment. Residues 399 to 405 (TERDSPA) are Lumenal-facing. Residues 406-426 (VIVIACLFILLSCGLMLWAAW) form a helical membrane-spanning segment. Residues 427-467 (RTVFFARRSVALYNNPAALLYGDEYVLHKYGFFYTMFNANH) lie on the Cytoplasmic side of the membrane. A helical membrane pass occupies residues 468–488 (YWWNIVLLSYIFVKSLLVGFA). At 489–495 (QASGQTQ) the chain is on the lumenal side. Residues 496 to 516 (VLFMFILDLFYFVAIIYYKPY) form a helical membrane-spanning segment. The Cytoplasmic segment spans residues 517–525 (LDRPTNIMN). The helical transmembrane segment at 526–546 (ILIATVTVVNSFLFMFFSDLF) threads the bilayer. A glycan (N-linked (GlcNAc...) asparagine) is linked at asparagine 547. The Lumenal segment spans residues 547–557 (NQSYKVAAIMG). The chain crosses the membrane as a helical span at residues 558–578 (WIFFIMNAAFSFILLMMILAF). Over 579 to 802 (AGMMLFSKNP…PPGFFDEGFM (224 aa)) the chain is Cytoplasmic. Phosphoserine is present on residues serine 616 and serine 635. Positions 629–802 (KDHDDNSDYE…PPGFFDEGFM (174 aa)) are disordered. 3 stretches are compositionally biased toward polar residues: residues 653–663 (DETTPTTVTSS), 697–717 (KQQT…STLG), and 761–788 (DTSS…NNKQ). Phosphoserine occurs at positions 779 and 782.

It belongs to the transient receptor potential (TRP) ion channel family.

The protein localises to the endoplasmic reticulum membrane. In terms of biological role, may be responsible for the transport of FAD into the endoplasmic reticulum lumen, where it is required for oxidative protein folding. The polypeptide is Putative flavin carrier protein 3 (FLC3) (Saccharomyces cerevisiae (strain ATCC 204508 / S288c) (Baker's yeast)).